A 310-amino-acid chain; its full sequence is Malate dehydrogenase (310 aa).

NAD(+)-binding positions include Gly7–Gly12 and Asp32. Positions 81 and 87 each coordinate substrate. NAD(+) contacts are provided by residues Asn94 and Val117–Asn119. Asn119 and Arg150 together coordinate substrate. The Proton acceptor role is filled by His174.

This sequence belongs to the LDH/MDH superfamily. MDH type 3 family. As to quaternary structure, homotetramer; arranged as a dimer of dimers.

The enzyme catalyses (S)-malate + NAD(+) = oxaloacetate + NADH + H(+). Functionally, catalyzes the reversible oxidation of malate to oxaloacetate. In Prosthecochloris vibrioformis (Chlorobium vibrioforme), this protein is Malate dehydrogenase.